We begin with the raw amino-acid sequence, 161 residues long: Allophycocyanin beta chain (161 aa).

Residue Asn-71 is modified to N4-methylasparagine. Cys-81 serves as a coordination point for (2R,3E)-phycocyanobilin.

The protein belongs to the phycobiliprotein family. In terms of assembly, heterodimer of an alpha and a beta chain. Contains one covalently linked phycocyanobilin chromophore.

It localises to the cellular thylakoid membrane. Its function is as follows. Light-harvesting photosynthetic bile pigment-protein from the phycobiliprotein complex. Allophycocyanin has a maximum absorption at approximately 650 nanometers. This Mastigocladus laminosus (Fischerella sp.) protein is Allophycocyanin beta chain (apcB).